We begin with the raw amino-acid sequence, 276 residues long: Large ribosomal subunit protein uL2 (276 aa).

Positions 225-276 are disordered; sequence MNPNDHPHGGGEGRNPIGRNPVTPWGKPALGAKTRKKKHPSNRFIVKRRGKK. A compositionally biased stretch (basic residues) spans 257–276; sequence KTRKKKHPSNRFIVKRRGKK.

This sequence belongs to the universal ribosomal protein uL2 family. As to quaternary structure, part of the 50S ribosomal subunit. Forms a bridge to the 30S subunit in the 70S ribosome.

Functionally, one of the primary rRNA binding proteins. Required for association of the 30S and 50S subunits to form the 70S ribosome, for tRNA binding and peptide bond formation. It has been suggested to have peptidyltransferase activity; this is somewhat controversial. Makes several contacts with the 16S rRNA in the 70S ribosome. In Desulfitobacterium hafniense (strain Y51), this protein is Large ribosomal subunit protein uL2.